The following is a 268-amino-acid chain: Glutamate racemase (268 aa).

Residues 14–15 (DS) and 46–47 (YG) each bind substrate. Residue Cys-78 is the Proton donor/acceptor of the active site. 79 to 80 (NT) contributes to the substrate binding site. Cys-192 (proton donor/acceptor) is an active-site residue. Residue 193 to 194 (TH) participates in substrate binding.

This sequence belongs to the aspartate/glutamate racemases family.

The enzyme catalyses L-glutamate = D-glutamate. It functions in the pathway cell wall biogenesis; peptidoglycan biosynthesis. Provides the (R)-glutamate required for cell wall biosynthesis. In Sphingopyxis alaskensis (strain DSM 13593 / LMG 18877 / RB2256) (Sphingomonas alaskensis), this protein is Glutamate racemase.